We begin with the raw amino-acid sequence, 115 residues long: Protein V2 (115 aa).

Belongs to the geminiviridae protein AV2/V2 family. As to quaternary structure, interacts with host SGS3.

It is found in the host cytoplasm. Its subcellular location is the host perinuclear region. Its function is as follows. Through its interaction with host SGS3, acts as a suppressor of RNA-mediated gene silencing, also known as post-transcriptional gene silencing (PTGS), a mechanism of plant viral defense that limits the accumulation of viral RNAs. In Tomato yellow leaf curl Sardinia virus (isolate Spain-2) (TYLCSV), this protein is Protein V2.